Here is a 436-residue protein sequence, read N- to C-terminus: Trigger factor (436 aa).

A PPIase FKBP-type domain is found at 164–249; the sequence is GDTVVIDYKG…IHEIKEKQLP (86 aa).

It belongs to the FKBP-type PPIase family. Tig subfamily.

Its subcellular location is the cytoplasm. The enzyme catalyses [protein]-peptidylproline (omega=180) = [protein]-peptidylproline (omega=0). In terms of biological role, involved in protein export. Acts as a chaperone by maintaining the newly synthesized protein in an open conformation. Functions as a peptidyl-prolyl cis-trans isomerase. The sequence is that of Trigger factor from Limosilactobacillus reuteri (strain DSM 20016) (Lactobacillus reuteri).